A 237-amino-acid polypeptide reads, in one-letter code: Ribonuclease PH (237 aa).

Phosphate-binding positions include arginine 86 and glycine 124 to arginine 126.

The protein belongs to the RNase PH family. Homohexameric ring arranged as a trimer of dimers.

It carries out the reaction tRNA(n+1) + phosphate = tRNA(n) + a ribonucleoside 5'-diphosphate. Its function is as follows. Phosphorolytic 3'-5' exoribonuclease that plays an important role in tRNA 3'-end maturation. Removes nucleotide residues following the 3'-CCA terminus of tRNAs; can also add nucleotides to the ends of RNA molecules by using nucleoside diphosphates as substrates, but this may not be physiologically important. Probably plays a role in initiation of 16S rRNA degradation (leading to ribosome degradation) during starvation. The polypeptide is Ribonuclease PH (Dinoroseobacter shibae (strain DSM 16493 / NCIMB 14021 / DFL 12)).